The primary structure comprises 114 residues: Hydrogenase maturation factor HypA (114 aa).

H2 serves as a coordination point for Ni(2+). C73, C76, C89, and C92 together coordinate Zn(2+).

This sequence belongs to the HypA/HybF family.

In terms of biological role, involved in the maturation of [NiFe] hydrogenases. Required for nickel insertion into the metal center of the hydrogenase. The chain is Hydrogenase maturation factor HypA from Syntrophus aciditrophicus (strain SB).